Here is a 189-residue protein sequence, read N- to C-terminus: Pyridoxal 5'-phosphate synthase subunit PdxT (189 aa).

Residue Gly-47–Ser-49 participates in L-glutamine binding. Residue Cys-79 is the Nucleophile of the active site. Residues Arg-106 and Ile-135 to Arg-136 contribute to the L-glutamine site. Active-site charge relay system residues include His-171 and Glu-173.

The protein belongs to the glutaminase PdxT/SNO family. In terms of assembly, in the presence of PdxS, forms a dodecamer of heterodimers. Only shows activity in the heterodimer.

The catalysed reaction is aldehydo-D-ribose 5-phosphate + D-glyceraldehyde 3-phosphate + L-glutamine = pyridoxal 5'-phosphate + L-glutamate + phosphate + 3 H2O + H(+). It carries out the reaction L-glutamine + H2O = L-glutamate + NH4(+). It participates in cofactor biosynthesis; pyridoxal 5'-phosphate biosynthesis. Functionally, catalyzes the hydrolysis of glutamine to glutamate and ammonia as part of the biosynthesis of pyridoxal 5'-phosphate. The resulting ammonia molecule is channeled to the active site of PdxS. This is Pyridoxal 5'-phosphate synthase subunit PdxT from Thermoanaerobacter pseudethanolicus (strain ATCC 33223 / 39E) (Clostridium thermohydrosulfuricum).